Here is a 180-residue protein sequence, read N- to C-terminus: ATP-dependent protease subunit HslV (180 aa).

Residue Thr6 is part of the active site. 3 residues coordinate Na(+): Ala164, Cys167, and Thr170.

It belongs to the peptidase T1B family. HslV subfamily. In terms of assembly, a double ring-shaped homohexamer of HslV is capped on each side by a ring-shaped HslU homohexamer. The assembly of the HslU/HslV complex is dependent on binding of ATP.

It is found in the cytoplasm. The enzyme catalyses ATP-dependent cleavage of peptide bonds with broad specificity.. With respect to regulation, allosterically activated by HslU binding. Protease subunit of a proteasome-like degradation complex believed to be a general protein degrading machinery. This chain is ATP-dependent protease subunit HslV, found in Borrelia duttonii (strain Ly).